The following is a 531-amino-acid chain: Cation transporter HKT1;3 (531 aa).

The Cytoplasmic portion of the chain corresponds to 1–46 (MNHCLVVSHKKLQTFRTFAASKFSSFTKSAQKSIKYSFQFIYQNNP). The next 2 helical transmembrane spans lie at 47-67 (LFVH…SLKV) and 108-128 (LWVL…MLGI). The Cytoplasmic segment spans residues 129 to 190 (HFMRAEFGTK…GGHVEPKTIK (62 aa)). 2 helical membrane passes run 191–211 (FLGF…SLLI) and 264–284 (ILLL…APCL). At 285 to 321 (RLMVWSLEKITGKKDCRYILEYPKAIGYKHLMSTRES) the chain is on the cytoplasmic side. The next 2 membrane-spanning stretches (helical) occupy residues 322-342 (VYLT…FLSL) and 383-403 (SAIL…SFLP). Residues 404–421 (RHDGEDSKTEKINKRKGL) are Cytoplasmic-facing. 2 helical membrane-spanning segments follow: residues 422–442 (LENW…LICI) and 494–514 (YGFA…VMLF). The Cytoplasmic portion of the chain corresponds to 515 to 530 (GRLKTFNMKGGRAWKL).

The protein belongs to the TrkH potassium transport family. HKT (TC 2.A.38.3) subfamily. As to quaternary structure, interacts with CNIH1. As to expression, weakly expressed. In roots, expressed in epidermis, exodermis, cortex, and sieve elements and companion cells of phloem. In mature leaves, expressed in large highly vacuolated cells of the adaxial epidermis, phloem and xylem.

Its subcellular location is the endoplasmic reticulum membrane. The protein resides in the golgi apparatus membrane. It catalyses the reaction Na(+)(in) = Na(+)(out). Its function is as follows. Functions as a highly-selective sodium transporter. Does not seem to function as sodium-potassium cotransporter. May be involved in turgor changes for rolling and unrolling of leaves in response to environmental variations. This is Cation transporter HKT1;3 from Oryza sativa subsp. japonica (Rice).